A 95-amino-acid polypeptide reads, in one-letter code: Putative ESAT-6-like protein X (95 aa).

The tract at residues 72–95 (HGQKVQRASSSMADTDRSVSSAWS) is disordered.

Belongs to the WXG100 family.

The polypeptide is Putative ESAT-6-like protein X (Mycobacterium leprae (strain TN)).